Reading from the N-terminus, the 513-residue chain is Probable cytosol aminopeptidase (513 aa).

Mn(2+) contacts are provided by lysine 277 and aspartate 282. The active site involves lysine 289. Mn(2+) contacts are provided by aspartate 300, aspartate 359, and glutamate 361. Arginine 363 is an active-site residue.

Belongs to the peptidase M17 family. It depends on Mn(2+) as a cofactor.

It localises to the cytoplasm. It carries out the reaction Release of an N-terminal amino acid, Xaa-|-Yaa-, in which Xaa is preferably Leu, but may be other amino acids including Pro although not Arg or Lys, and Yaa may be Pro. Amino acid amides and methyl esters are also readily hydrolyzed, but rates on arylamides are exceedingly low.. The enzyme catalyses Release of an N-terminal amino acid, preferentially leucine, but not glutamic or aspartic acids.. Its function is as follows. Presumably involved in the processing and regular turnover of intracellular proteins. Catalyzes the removal of unsubstituted N-terminal amino acids from various peptides. This chain is Probable cytosol aminopeptidase, found in Mycobacterium sp. (strain JLS).